A 78-amino-acid chain; its full sequence is Acyl carrier protein (78 aa).

Residues 1–76 (MALFEDIQAV…DVVKYIEDNK (76 aa)) enclose the Carrier domain. Residue Ser36 is modified to O-(pantetheine 4'-phosphoryl)serine.

It belongs to the acyl carrier protein (ACP) family. In terms of processing, 4'-phosphopantetheine is transferred from CoA to a specific serine of apo-ACP by AcpS. This modification is essential for activity because fatty acids are bound in thioester linkage to the sulfhydryl of the prosthetic group.

The protein localises to the cytoplasm. It participates in lipid metabolism; fatty acid biosynthesis. Functionally, carrier of the growing fatty acid chain in fatty acid biosynthesis. This chain is Acyl carrier protein, found in Helicobacter pylori (strain ATCC 700392 / 26695) (Campylobacter pylori).